The primary structure comprises 316 residues: tRNA selenocysteine 1-associated protein 1-like (316 aa).

2 consecutive RRM domains span residues 6 to 89 (TSLW…YATY) and 99 to 178 (FSVF…IAVN). A compositionally biased stretch (pro residues) spans 239 to 248 (PPMGMPPMPP). Residues 239–285 (PPMGMPPMPPDMQGSTEAHDGTEEVEEDPSEDPNPQVDVEELNRQYM) form a disordered region.

The protein belongs to the RRM TRSPAP family.

It is found in the nucleus. It localises to the cytoplasm. In terms of biological role, involved in the early steps of selenocysteine biosynthesis and tRNA(Sec) charging to the later steps resulting in the cotranslational incorporation of selenocysteine into selenoproteins. This is tRNA selenocysteine 1-associated protein 1-like (trnau1apl) from Danio rerio (Zebrafish).